The sequence spans 371 residues: Flagellar P-ring protein 1 (371 aa).

Positions 1 to 19 (MRRALLLAALLACAPPAFA) are cleaved as a signal peptide.

Belongs to the FlgI family. The basal body constitutes a major portion of the flagellar organelle and consists of four rings (L,P,S, and M) mounted on a central rod.

The protein localises to the periplasm. It is found in the bacterial flagellum basal body. In terms of biological role, assembles around the rod to form the L-ring and probably protects the motor/basal body from shearing forces during rotation. This chain is Flagellar P-ring protein 1, found in Cereibacter sphaeroides (strain ATCC 17023 / DSM 158 / JCM 6121 / CCUG 31486 / LMG 2827 / NBRC 12203 / NCIMB 8253 / ATH 2.4.1.) (Rhodobacter sphaeroides).